The chain runs to 607 residues: Proteasome-associated ATPase (607 aa).

Over residues 1–17 (MTESDRHDTPKGDRRIS) the composition is skewed to basic and acidic residues. The disordered stretch occupies residues 1 to 65 (MTESDRHDTP…GRPAADNKEL (65 aa)). Residues 59 to 102 (AADNKELQERVDNLTARNAKLLDTLKDARQQLVALREEVDRLGQ) are a coiled coil. An ATP-binding site is contributed by 294–299 (GCGKTL). A docks into pockets in the proteasome alpha-ring region spans residues 606–607 (YL).

This sequence belongs to the AAA ATPase family. Homohexamer. Assembles into a hexameric ring structure that caps the 20S proteasome core. Strongly interacts with the prokaryotic ubiquitin-like protein Pup through a hydrophobic interface; the interacting region of ARC lies in its N-terminal coiled-coil domain. There is one Pup binding site per ARC hexamer ring. Upon ATP-binding, the C-terminus of ARC interacts with the alpha-rings of the proteasome core, possibly by binding to the intersubunit pockets.

Its pathway is protein degradation; proteasomal Pup-dependent pathway. ATPase which is responsible for recognizing, binding, unfolding and translocation of pupylated proteins into the bacterial 20S proteasome core particle. May be essential for opening the gate of the 20S proteasome via an interaction with its C-terminus, thereby allowing substrate entry and access to the site of proteolysis. Thus, the C-termini of the proteasomal ATPase may function like a 'key in a lock' to induce gate opening and therefore regulate proteolysis. The polypeptide is Proteasome-associated ATPase (Gordonia bronchialis (strain ATCC 25592 / DSM 43247 / BCRC 13721 / JCM 3198 / KCTC 3076 / NBRC 16047 / NCTC 10667) (Rhodococcus bronchialis)).